Reading from the N-terminus, the 454-residue chain is MQKHSPGPPALALLSQSLLTTGNGDTLIINCPGFGQHRVDPAAFQAVFDRKAIGPVTNYSVATHVNISFTLSAIWNCYSRIHTFNCHHARPWHNQFVQWNPDECGGIKKSGMATENLWLSDVFIEESVDQTPAGLMASMSIVKATSNTISQCGWSASANWTPSISPSMDRARAWRRMSRSFQIHHRTSFRTRREWVLLGIQKRTIKVTVATNQYEQAIFHVAIRRRCRPSPYVVNFLVPSGILIAIDALSFYLPLESGNCAPFKMTVLLGYSVFLLMMNDLLPATSTSSHASLVAPLALMQTPLPAGVYFALCLSLMVGSLLETIFITHLLHVATTQPLPLPRWLHSLLLHCTGQGRCCPTAPQKGNKGPGLTPTHLPGVKEPEVSAGQMPGPGEAELTGGSEWTRAQREHEAQKQHSVELWVQFSHAMDALLFRLYLLFMASSIITVICLWNT.

Positions 1 to 24 are cleaved as a signal peptide; it reads MQKHSPGPPALALLSQSLLTTGNG. Over 25–232 the chain is Extracellular; it reads DTLIINCPGF…IRRRCRPSPY (208 aa). Asn-66 carries N-linked (GlcNAc...) asparagine glycosylation. Residues 233–253 form a helical membrane-spanning segment; sequence VVNFLVPSGILIAIDALSFYL. The Cytoplasmic portion of the chain corresponds to 254 to 264; the sequence is PLESGNCAPFK. A helical transmembrane segment spans residues 265–285; that stretch reads MTVLLGYSVFLLMMNDLLPAT. Residues 286–306 are Extracellular-facing; the sequence is STSSHASLVAPLALMQTPLPA. Residues 307–327 traverse the membrane as a helical segment; sequence GVYFALCLSLMVGSLLETIFI. Over 328–431 the chain is Cytoplasmic; it reads THLLHVATTQ…WVQFSHAMDA (104 aa). Residues 363–410 form a disordered region; sequence PQKGNKGPGLTPTHLPGVKEPEVSAGQMPGPGEAELTGGSEWTRAQRE. The segment at 399-430 is HA-stretch; determines single-channel conductance in 5-HT3 receptors; the sequence is TGGSEWTRAQREHEAQKQHSVELWVQFSHAMD. A helical transmembrane segment spans residues 432–452; that stretch reads LLFRLYLLFMASSIITVICLW. The Extracellular portion of the chain corresponds to 453–454; that stretch reads NT.

Belongs to the ligand-gated ion channel (TC 1.A.9) family. 5-hydroxytryptamine receptor (TC 1.A.9.2) subfamily. HTR3D sub-subfamily. As to quaternary structure, forms homopentameric as well as heteropentameric serotonin-activated cation-selective channel complexes with HTR3A. The homomeric complex is not functional. Heteropentameric complexes display properties which resemble that of neuronal serotonin-activated channels in vivo. In terms of tissue distribution, expressed in liver, as well as fetal and adult colon and kidney.

It localises to the postsynaptic cell membrane. It is found in the cell membrane. The catalysed reaction is Na(+)(in) = Na(+)(out). It carries out the reaction K(+)(in) = K(+)(out). The enzyme catalyses Ca(2+)(in) = Ca(2+)(out). Functionally, forms serotonin (5-hydroxytryptamine/5-HT3)-activated cation-selective channel complexes, which when activated cause fast, depolarizing responses in neurons. This chain is 5-hydroxytryptamine receptor 3D, found in Homo sapiens (Human).